The chain runs to 140 residues: Putative pre-16S rRNA nuclease (140 aa).

It belongs to the YqgF nuclease family.

Its subcellular location is the cytoplasm. Functionally, could be a nuclease involved in processing of the 5'-end of pre-16S rRNA. This Moorella thermoacetica (strain ATCC 39073 / JCM 9320) protein is Putative pre-16S rRNA nuclease.